A 200-amino-acid polypeptide reads, in one-letter code: Non-specific lipid transfer protein GPI-anchored 16 (200 aa).

A signal peptide spans 1-20 (MEGLTLIVVMMSSFMLGGQG). 4 disulfides stabilise this stretch: cysteine 27–cysteine 72, cysteine 38–cysteine 56, cysteine 57–cysteine 98, and cysteine 70–cysteine 107. The N-linked (GlcNAc...) asparagine glycan is linked to asparagine 87. The segment at 134–182 (SPGASKAAGTTPTQAPAPDTPADGPTGPTTKSGIRPVDQPMQPTGLAQS) is disordered. A compositionally biased stretch (low complexity) spans 140-163 (AAGTTPTQAPAPDTPADGPTGPTT). A lipid anchor (GPI-anchor amidated threonine) is attached at threonine 177. Positions 178–200 (GLAQSSTSPFLPLLFISLILLNL) are cleaved as a propeptide — removed in mature form.

Belongs to the plant LTP family. As to expression, expressed in seedlings, preferentially in hypocotyls and roots. Also observed in siliques.

The protein localises to the cell membrane. In terms of biological role, essential protein involved in female gametophyte development. Probable lipid transfer protein. The chain is Non-specific lipid transfer protein GPI-anchored 16 from Arabidopsis thaliana (Mouse-ear cress).